A 465-amino-acid polypeptide reads, in one-letter code: CUGBP Elav-like family member 3 (465 aa).

RRM domains follow at residues Ile7–Ser88 and Lys95–Thr174. Disordered regions lie at residues Pro283–Ala311 and Pro345–Gly379. Pro residues predominate over residues Pro345–Gln358. Over residues Gln359–Gln373 the composition is skewed to low complexity. In terms of domain architecture, RRM 3 spans Cys380–Pro458.

It belongs to the CELF/BRUNOL family.

It localises to the nucleus. The protein localises to the cytoplasm. Its function is as follows. RNA-binding protein involved in the regulation of pre-mRNA alternative splicing. Mediates exon inclusion and/or exclusion in pre-mRNA that are subject to tissue-specific and developmentally regulated alternative splicing. Specifically activates exon 5 inclusion of cardiac isoforms of TNNT2 during heart remodeling at the juvenile to adult transition. Activates the splicing of MAPT/Tau exon 10. Binds to muscle-specific splicing enhancer (MSE) intronic sites flanking the alternative exon 5 of TNNT2 pre-mRNA. The chain is CUGBP Elav-like family member 3 (Celf3) from Mus musculus (Mouse).